Consider the following 577-residue polypeptide: Insulin-like growth factor 2 mRNA-binding protein 1 (577 aa).

2 consecutive RRM domains span residues 2–75 (NKLY…HSVP) and 81–156 (RKIQ…YIPD). Phosphoserine is present on residues serine 12 and serine 73. Residues 156–190 (DEQITQGPENGRRGGFGSRGQPRQGSPVAAGAPAK) form a disordered region. Serine 181 is subject to Phosphoserine; by MTOR. 4 KH domains span residues 195–260 (DIPL…CKMI), 276–343 (EVPL…EQEI), 405–470 (QEMV…QGRI), and 487–553 (KLET…QRKI). Positions 312–323 (ISSLQDLTLYNP) are sufficient for nuclear export. The tract at residues 485-495 (EVKLETHIRVP) is sufficient for nuclear export. Position 528 is a phosphothreonine (threonine 528).

The protein belongs to the RRM IMP/VICKZ family. In terms of assembly, can form homodimers and heterodimers with IGF2BP1 and IGF2BP3. Component of the coding region determinant (CRD)-mediated complex, composed of DHX9, HNRNPU, IGF2BP1, SYNCRIP and YBX1. Identified in a mRNP complex, at least composed of DHX9, DDX3X, ELAVL1, HNRNPU, IGF2BP1, ILF3, PABPC1, PCBP2, PTBP2, STAU1, STAU2, SYNCRIP and YBX1. Associates with mRNP complex. Interacts with FMR1. Component of a multisubunit autoregulatory RNP complex (ARC), at least composed of IGF2BP1, PABPC1 and CSDE1. Interacts with AGO1 and AGO2. Interacts, through domains KH3 and KH4, with PABPC1 in an RNA-independent manner. Component of a TAU mRNP complex, at least composed of IGF2BP1, ELAVL4 and G3BP. Interacts with ELAVL4 in an RNA-dependent manner. Associates with microtubules and polysomes. Interacts with ELAVL1 and MATR3. In terms of processing, phosphorylated at Ser-181 by mTORC2 cotranslationally, promoting binding to the 3'-UTR of IGF2 mRNA. In terms of tissue distribution, expressed in zygotes and blastocysts (at protein level). Expressed in brain, skeletal muscle, trophoblasts of placenta, oocytes and spermatogonia (at protein level). Expressed in testis and ovary. Following colon injury, expressed in the wound bed mesenchyme during the first phase of repair, probably by colonic mesenchymal stem cells (at protein level).

Its subcellular location is the nucleus. It is found in the cytoplasm. The protein resides in the perinuclear region. The protein localises to the P-body. It localises to the stress granule. Its subcellular location is the cell projection. It is found in the lamellipodium. The protein resides in the dendrite. The protein localises to the dendritic spine. It localises to the growth cone. Its subcellular location is the filopodium. It is found in the axon. Functionally, RNA-binding factor that recruits target transcripts to cytoplasmic protein-RNA complexes (mRNPs). This transcript 'caging' into mRNPs allows mRNA transport and transient storage. It also modulates the rate and location at which target transcripts encounter the translational apparatus and shields them from endonuclease attacks or microRNA-mediated degradation. Preferentially binds to N6-methyladenosine (m6A)-containing mRNAs and increases their stability. Regulates localized beta-actin/ACTB mRNA translation, a crucial process for cell polarity, cell migration and neurite outgrowth. Co-transcriptionally associates with the ACTB mRNA in the nucleus. This binding involves a conserved 54-nucleotide element in the ACTB mRNA 3'-UTR, known as the 'zipcode'. The RNP thus formed is exported to the cytoplasm, binds to a motor protein and is transported along the cytoskeleton to the cell periphery. During transport, prevents ACTB mRNA from being translated into protein. When the RNP complex reaches its destination near the plasma membrane, IGF2BP1 is phosphorylated. This releases the mRNA, allowing ribosomal 40S and 60S subunits to assemble and initiate ACTB protein synthesis. Monomeric ACTB then assembles into the subcortical actin cytoskeleton. During neuronal development, key regulator of neurite outgrowth, growth cone guidance and neuronal cell migration, presumably through the spatiotemporal fine tuning of protein synthesis, such as that of ACTB. May regulate mRNA transport to activated synapses. Binds to the 3'-UTR of CD44 mRNA and stabilizes it, hence promotes cell adhesion and invadopodia formation in cancer cells. Binds to the oncofetal H19 transcript and regulates its localization. Binds to and stabilizes BTRC/FBW1A mRNA. Binds to the adenine-rich autoregulatory sequence (ARS) located in PABPC1 mRNA and represses its translation. PABPC1 mRNA-binding is stimulated by PABPC1 protein. Prevents BTRC/FBW1A mRNA degradation by disrupting microRNA-dependent interaction with AGO2. During cellular stress, such as oxidative stress or heat shock, stabilizes target mRNAs that are recruited to stress granules, including CD44, IGF2, MAPK4, MYC, PTEN, RAPGEF2 and RPS6KA5 transcripts. Interacts with GAP43 transcript and transports it to axons. Binds to the 3'-UTR of IGF2 mRNA by a mechanism of cooperative and sequential dimerization and regulates IGF2 mRNA subcellular localization and translation. Binds to MYC mRNA, in the coding region instability determinant (CRD) of the open reading frame (ORF), hence prevents MYC cleavage by endonucleases and possibly microRNA targeting to MYC-CRD. Binding to MYC mRNA is enhanced by m6A-modification of the CRD. Binds to and stabilizes ABCB1/MDR-1 mRNA. Binds to the neuron-specific TAU mRNA and regulates its localization. Plays a direct role in the transport and translation of transcripts required for axonal regeneration in adult sensory neurons. During interstinal wound repair, interacts with and stabilizes PTGS2 transcript. PTGS2 mRNA stabilization may be crucial for colonic mucosal wound healing. This chain is Insulin-like growth factor 2 mRNA-binding protein 1 (Igf2bp1), found in Mus musculus (Mouse).